Consider the following 485-residue polypeptide: NADH-quinone oxidoreductase subunit N (485 aa).

Transmembrane regions (helical) follow at residues 8–28 (LIALLPLLIVGLTVVVVMLSI), 35–55 (FINTTLTVIGLNLALLSLYFV), 75–95 (LYIGLVLVASLATATFAYSWL), 104–124 (EFYLLVLIATVGGILLACANH), 125–145 (LASLFIGIELLTLPLFGLIGY), 159–179 (YMLLSAAASSFMLFGIALLYA), 203–223 (ILSGLGMLVVGLGFKLSLVPF), 235–255 (PAPVSTFLATASKIAIFAVVI), 271–291 (TVLTVIAIASMLFGNLMALTQ), 297–317 (LLGYSSIAHLGYLLVALVAVQ), 326–346 (VGIYLAGYLFSSIGAFGVVSL), 383–403 (LAGIPMTFGFIGKFYVIVLGV), 406–426 (ELWWLTGAVVVGSAIGLYYYL), and 455–475 (MVVLISALLVLALGIWPQPLI).

It belongs to the complex I subunit 2 family. As to quaternary structure, NDH-1 is composed of 13 different subunits. Subunits NuoA, H, J, K, L, M, N constitute the membrane sector of the complex.

Its subcellular location is the cell inner membrane. It catalyses the reaction a quinone + NADH + 5 H(+)(in) = a quinol + NAD(+) + 4 H(+)(out). NDH-1 shuttles electrons from NADH, via FMN and iron-sulfur (Fe-S) centers, to quinones in the respiratory chain. The immediate electron acceptor for the enzyme in this species is believed to be ubiquinone. Couples the redox reaction to proton translocation (for every two electrons transferred, four hydrogen ions are translocated across the cytoplasmic membrane), and thus conserves the redox energy in a proton gradient. This Photorhabdus laumondii subsp. laumondii (strain DSM 15139 / CIP 105565 / TT01) (Photorhabdus luminescens subsp. laumondii) protein is NADH-quinone oxidoreductase subunit N.